The following is a 143-amino-acid chain: Anti-sigma F factor (143 aa).

Belongs to the anti-sigma-factor family.

It catalyses the reaction L-seryl-[protein] + ATP = O-phospho-L-seryl-[protein] + ADP + H(+). It carries out the reaction L-threonyl-[protein] + ATP = O-phospho-L-threonyl-[protein] + ADP + H(+). Its function is as follows. Binds to sigma F and blocks its ability to form an RNA polymerase holoenzyme (E-sigma F). Phosphorylates SpoIIAA on a serine residue. This phosphorylation may enable SpoIIAA to act as an anti-anti-sigma factor that counteracts SpoIIAB and thus releases sigma F from inhibition. The protein is Anti-sigma F factor of Clostridium beijerinckii (strain ATCC 51743 / NCIMB 8052) (Clostridium acetobutylicum).